The following is a 611-amino-acid chain: Actin-related protein 5 (611 aa).

Coiled-coil stretches lie at residues 290 to 329 (TLTSEEKQERRQQQLRRLQELNARRREEKLQLDQERLDRL) and 355 to 386 (SAEELQSYINKLSLAIEQTKQKILQAEVNIEV).

This sequence belongs to the actin family. ARP5 subfamily. In terms of assembly, component of the chromatin remodeling INO80 complex.

It is found in the nucleus. Functionally, proposed core component of the chromatin remodeling INO80 complex which is involved in transcriptional regulation, DNA replication and probably DNA repair. This chain is Actin-related protein 5 (ACTR5), found in Gallus gallus (Chicken).